A 153-amino-acid polypeptide reads, in one-letter code: Putative OPA3-like protein CG43998 (153 aa).

Residues 101-153 (ELSKTYTKTKKQNQEIEDQKRVLDECVDCISADVERNQREINWIKAALKNVEK) adopt a coiled-coil conformation.

It belongs to the OPA3 family.

This Drosophila melanogaster (Fruit fly) protein is Putative OPA3-like protein CG43998.